Here is a 233-residue protein sequence, read N- to C-terminus: Putative N-acetylmuramoyl-L-alanine amidase (233 aa).

Positions 1–219 (MIDPGHGGQD…IANAIYIALK (219 aa)) constitute a MurNAc-LAA domain.

The protein belongs to the N-acetylmuramoyl-L-alanine amidase 3 family.

It localises to the secreted. The enzyme catalyses Hydrolyzes the link between N-acetylmuramoyl residues and L-amino acid residues in certain cell-wall glycopeptides.. In terms of biological role, cell-wall hydrolase involved in septum cleavage during cell division. This is Putative N-acetylmuramoyl-L-alanine amidase (amiB) from Buchnera aphidicola subsp. Schizaphis graminum (strain Sg).